The chain runs to 167 residues: NAD(P)H-quinone oxidoreductase subunit I, chloroplastic (167 aa).

2 consecutive 4Fe-4S ferredoxin-type domains span residues 55–84 and 95–124; these read GRIH…VDWK and LNYS…MTEE. Residues C64, C67, C70, C74, C104, C107, C110, and C114 each coordinate [4Fe-4S] cluster.

This sequence belongs to the complex I 23 kDa subunit family. As to quaternary structure, NDH is composed of at least 16 different subunits, 5 of which are encoded in the nucleus. [4Fe-4S] cluster serves as cofactor.

It is found in the plastid. Its subcellular location is the chloroplast thylakoid membrane. It catalyses the reaction a plastoquinone + NADH + (n+1) H(+)(in) = a plastoquinol + NAD(+) + n H(+)(out). The catalysed reaction is a plastoquinone + NADPH + (n+1) H(+)(in) = a plastoquinol + NADP(+) + n H(+)(out). NDH shuttles electrons from NAD(P)H:plastoquinone, via FMN and iron-sulfur (Fe-S) centers, to quinones in the photosynthetic chain and possibly in a chloroplast respiratory chain. The immediate electron acceptor for the enzyme in this species is believed to be plastoquinone. Couples the redox reaction to proton translocation, and thus conserves the redox energy in a proton gradient. In Eucalyptus globulus subsp. globulus (Tasmanian blue gum), this protein is NAD(P)H-quinone oxidoreductase subunit I, chloroplastic.